The chain runs to 319 residues: Methyltransferase tpcM (319 aa).

Residues 63–155 (DVGAGIGPYA…QLRPGGTFAC (93 aa)) form a methyltransferase domain region.

Belongs to the methyltransferase superfamily. Specifically expressed in conidia.

Its pathway is secondary metabolite biosynthesis. In terms of biological role, methyltransferase; part of the gene cluster that mediates the biosynthesis of trypacidin, a mycotoxin with antiprotozoal activity and that plays a role in the infection process. The pathway begins with the synthesis of atrochrysone thioester by the polyketide synthase (PKS) tpcC. The atrochrysone carboxyl ACP thioesterase tpcB then breaks the thioester bond and releases the atrochrysone carboxylic acid from tpcC. The decarboxylase tpcK converts atrochrysone carboxylic acid to atrochrysone which is further reduced into emodin anthrone. The next step is performed by the emodin anthrone oxygenase tpcL that catalyzes the oxidation of emodinanthrone to emodin. Emodin O-methyltransferase encoded by tpcA catalyzes methylation of the 8-hydroxy group of emodin to form questin. Ring cleavage of questin by questin oxidase tpcI leads to desmethylsulochrin via several intermediates including questin epoxide. Another methylation step catalyzed by tpcM leads to the formation of sulochrin which is further converted to monomethylsulfochrin by tpcH. Finally, the tpcJ catalyzes the conversion of monomethylsulfochrin to trypacidin. Trypacidin is toxic for human pulmonary and bronchial epithelial cells by initiating the intracellular formation of nitric oxide (NO) and hydrogen peroxide (H(2)O(2)), thus triggering host necrotic cell death. The trypacidin pathway is also able to produce endocrocin via a distinct route from the endocrocin Enc pathway. This chain is Methyltransferase tpcM, found in Aspergillus fumigatus (strain ATCC MYA-4609 / CBS 101355 / FGSC A1100 / Af293) (Neosartorya fumigata).